A 188-amino-acid polypeptide reads, in one-letter code: Quinone reductase (188 aa).

FMN contacts are provided by residues serine 13 to asparagine 20, glutamate 82 to tyrosine 85, and serine 117.

The protein belongs to the SsuE family. As to quaternary structure, homotetramer. Dimer of dimers. The tetrameric configuration has a central role in chromate reductase activity. FMN serves as cofactor.

It catalyses the reaction a quinone + NADH + H(+) = a quinol + NAD(+). The catalysed reaction is a quinone + NADPH + H(+) = a quinol + NADP(+). It carries out the reaction Cr(6+) + 2 NADH + O2 = Cr(3+) + superoxide + 2 NAD(+) + 2 H(+). The enzyme catalyses Cr(6+) + 2 NADPH + O2 = Cr(3+) + superoxide + 2 NADP(+) + 2 H(+). Its function is as follows. Catalyzes the reduction of quinones. Acts by simultaneous two-electron transfer, avoiding formation of highly reactive semiquinone intermediates and producing quinols that promote tolerance of H(2)O(2). Quinone reduction is probably the primary biological role of ChrR. Can also reduce toxic chromate to insoluble and less toxic Cr(3+). Catalyzes the transfer of three electrons to Cr(6+) producing Cr(3+) and one electron to molecular oxygen without producing the toxic Cr(5+) species and only producing a minimal amount of reactive oxygen species (ROS). Chromate reduction protects the cell against chromate toxicity, but is likely a secondary activity. This chain is Quinone reductase (chrR), found in Escherichia coli O157:H7.